We begin with the raw amino-acid sequence, 458 residues long: Cell death abnormality protein 8 (458 aa).

Residues 1 to 45 are Cytoplasmic-facing; it reads MFLKKHKSKLLLVPRDEEQEDAGIVAVLTDRIPSVLLVRWFDLFC. The chain crosses the membrane as a helical span at residues 46–66; the sequence is FGFAMCSYALDFFSDIGIAIF. Residues 67–77 are Extracellular-facing; the sequence is HFWAGRYLSGS. A helical transmembrane segment spans residues 78-98; it reads LVLAFALLPSVIINIISMVWM. Topologically, residues 99-123 are cytoplasmic; it reads LDDEMHWKRRAHPRRTGTFELNQKR. The chain crosses the membrane as a helical span at residues 124 to 144; sequence FIPLSKMIVLCICQMGPLFWY. Topologically, residues 145–219 are extracellular; the sequence is YKALYYGWMF…YYQTGTYPYW (75 aa). A helical transmembrane segment spans residues 220 to 240; that stretch reads LYFQAASLLLSIISISWSVVV. Over 241-274 the chain is Cytoplasmic; the sequence is QNRSLRMIRDDKVNIWPHEAVLQFCWRFLTILAR. Helical transmembrane passes span 275–295 and 296–316; these read IITL…LISV and HLLV…DACT. Residue His317 is a topological domain, extracellular. The chain crosses the membrane as a helical span at residues 318 to 338; sequence IEKLLLLINTFIHIFIPFNMV. Over 339-353 the chain is Cytoplasmic; that stretch reads EGNTRWRYLTAYSVE. The chain crosses the membrane as a helical span at residues 354-374; sequence FIEMMLVCWLLPLSLNTFPYI. Residues 375 to 378 are Extracellular-facing; sequence EKVQ. A helical transmembrane segment spans residues 379–399; the sequence is VGVPISFIAGIAIMMMYYQFF. Residues 400-458 are Cytoplasmic-facing; that stretch reads HPNRRQLIVTQSQEDLSLNVQKSVETLTPKLESSLEISGEQNTSQDLVSELLLDVEHEN.

The protein belongs to the XK family. In terms of processing, cleavage by ced-3 activates ced-8 function in promoting phosphatidylserine exposure at the surface of apoptotic cells.

It localises to the cell membrane. The enzyme catalyses a 1,2-diacyl-sn-glycero-3-phospho-L-serine(in) = a 1,2-diacyl-sn-glycero-3-phospho-L-serine(out). Phospholipid scramblase that acts downstream of ced-9 and caspase ced-3 to promote phosphatidylserine exposure on apoptotic cell surface. Phosphatidylserine is a specific marker only present at the surface of apoptotic cells and acts as a specific signal for engulfment. Regulates apoptosis kinetics during embryonic development. Not required for engulfment of germ cell corpses. The sequence is that of Cell death abnormality protein 8 from Caenorhabditis elegans.